We begin with the raw amino-acid sequence, 66 residues long: UPF0337 protein BP1738 (66 aa).

This sequence belongs to the UPF0337 (CsbD) family.

The chain is UPF0337 protein BP1738 from Bordetella pertussis (strain Tohama I / ATCC BAA-589 / NCTC 13251).